Reading from the N-terminus, the 351-residue chain is Gene 58 protein (351 aa).

The next 11 membrane-spanning stretches (helical) occupy residues 14–34, 43–63, 70–90, 97–117, 133–153, 155–175, 214–234, 240–260, 268–288, 293–313, and 328–348; these read FSTG…ATVF, QSVL…FCAV, LGLL…SWSL, LVPG…IVCF, LGFL…IYLT, VMFA…SHVW, LICL…LVMF, GVST…SLII, AVYS…GYLF, LSML…CLLY, and FILN…LLAQ.

The protein belongs to the herpesviridae BMRF2 family.

The protein resides in the host membrane. The sequence is that of Gene 58 protein (58) from Connochaetes taurinus (Blue wildebeest).